Here is an 865-residue protein sequence, read N- to C-terminus: cGMP-specific 3',5'-cyclic phosphodiesterase (865 aa).

Position 92 is a phosphoserine (serine 92). GAF domains follow at residues 154–304 and 336–493; these read DVTA…GIVL and SLEV…GLGI. The 325-residue stretch at 526-850 folds into the PDEase domain; sequence ETRELQSLAA…QKWQALAEQQ (325 aa). Catalysis depends on histidine 603, which acts as the Proton donor. Residues histidine 607, histidine 643, aspartate 644, and aspartate 754 each coordinate Zn(2+). Position 644 (aspartate 644) interacts with Mg(2+). Position 807 (glutamine 807) interacts with 3',5'-cyclic GMP.

It belongs to the cyclic nucleotide phosphodiesterase family. The cofactor is Zn(2+). Requires Mg(2+) as cofactor. In terms of processing, phosphorylation is regulated by binding of cGMP to the two allosteric sites. Phosphorylation by PRKG1 leads to its activation.

It catalyses the reaction 3',5'-cyclic GMP + H2O = GMP + H(+). Its pathway is purine metabolism; 3',5'-cyclic GMP degradation; GMP from 3',5'-cyclic GMP: step 1/1. Most potently inhibited by zaprinast and dipyridamole. Functionally, plays a role in signal transduction by regulating the intracellular concentration of cyclic nucleotides. This phosphodiesterase catalyzes the specific hydrolysis of cGMP to 5'-GMP. Specifically regulates nitric-oxide-generated cGMP. The protein is cGMP-specific 3',5'-cyclic phosphodiesterase (PDE5A) of Bos taurus (Bovine).